The following is a 68-amino-acid chain: Conotoxin Ar5.3 (68 aa).

The signal sequence occupies residues 1–19 (MLCLPVFIILLLLASPAAS). A propeptide spanning residues 20-53 (NPLEKRIQNDLIRAALEDADMENDPRSIIDSVKT) is cleaved from the precursor.

The protein belongs to the conotoxin T superfamily. Post-translationally, contains 2 disulfide bonds that can be either 'C1-C3, C2-C4' or 'C1-C4, C2-C3', since these disulfide connectivities have been observed for conotoxins with cysteine framework V (for examples, see AC P0DQQ7 and AC P81755). As to expression, expressed by the venom duct.

It localises to the secreted. In Conus arenatus (Sand-dusted cone), this protein is Conotoxin Ar5.3.